Reading from the N-terminus, the 808-residue chain is Sucrose synthase 1 (808 aa).

A GT-B glycosyltransferase region spans residues 277 to 754 (MVFNVVILSP…GLQRIEEKYT (478 aa)).

The protein belongs to the glycosyltransferase 1 family. Plant sucrose synthase subfamily. In terms of assembly, homotetramer. As to expression, expressed in the phloem of leaves and in roots. Detected in the whole plant but more precisely confined to the vasculature in cotyledons, mature leaves and siliques.

It carries out the reaction an NDP-alpha-D-glucose + D-fructose = a ribonucleoside 5'-diphosphate + sucrose + H(+). Sucrose-cleaving enzyme that provides UDP-glucose and fructose for various metabolic pathways. This Arabidopsis thaliana (Mouse-ear cress) protein is Sucrose synthase 1 (SUS1).